A 69-amino-acid chain; its full sequence is Sec-independent protein translocase protein TatA (69 aa).

The chain crosses the membrane as a helical span at residues 1–21 (MMPGPFELIIILVIVLLLFGG).

Belongs to the TatA/E family. In terms of assembly, the Tat system comprises two distinct complexes: a TatABC complex, containing multiple copies of TatA, TatB and TatC subunits, and a separate TatA complex, containing only TatA subunits. Substrates initially bind to the TatABC complex, which probably triggers association of the separate TatA complex to form the active translocon.

The protein localises to the cell inner membrane. Functionally, part of the twin-arginine translocation (Tat) system that transports large folded proteins containing a characteristic twin-arginine motif in their signal peptide across membranes. TatA could form the protein-conducting channel of the Tat system. This is Sec-independent protein translocase protein TatA from Vesicomyosocius okutanii subsp. Calyptogena okutanii (strain HA).